We begin with the raw amino-acid sequence, 157 residues long: Cuticle protein 19 (157 aa).

Repeat copies occupy residues 11-14, 18-21, 24-27, 29-32, 39-42, and 47-50. The Chitin-binding type R&amp;R domain occupies 56 to 127; sequence YPKYAFEYGV…SGPSAHPAPA (72 aa). Repeat 7 spans residues 141–144; it reads AAPA.

Its function is as follows. Component of the cuticle of migratory locust which contains more than 100 different structural proteins. In Locusta migratoria (Migratory locust), this protein is Cuticle protein 19.